Consider the following 156-residue polypeptide: WASQVSENRPVCKAIIQGKQFEGLVDTGADVSIIALNQWPKNWPKQKAVIGLVGIGTASEVYQSMEILHCLGPDNQESTVQPMITSIPLNLWGRDLLQQWGAEITMPAPLYSPTSQKIMTKRGYIPGKGLGKNEDGIKIPFEAKINQKREGIGYPF.

Residues 21 to 96 (FEGLVDTGAD…IPLNLWGRDL (76 aa)) form the Peptidase A2 domain. Asp26 is an active-site residue. In terms of domain architecture, G-patch spans 111–156 (YSPTSQKIMTKRGYIPGKGLGKNEDGIKIPFEAKINQKREGIGYPF).

This sequence belongs to the peptidase A2 family. HERV class-II K(HML-2) subfamily. In terms of assembly, active as a homodimer. In terms of processing, autoproteolytically processed at the N-terminus. Expected C-terminal autoprocessing not detected. The sequence shown is that of the processed Pro protein.

It catalyses the reaction Processing at the authentic HIV-1 PR recognition site and release of the mature p17 matrix and the p24 capsid protein, as a result of the cleavage of the -SQNY-|-PIVQ- cleavage site.. In terms of biological role, retroviral proteases have roles in the processing of the primary translation products and the maturation of the viral particle. Endogenous Pro proteins may have kept, lost or modified their original function during evolution. This chain is Endogenous retrovirus group K member 8 Pro protein (ERVK-8), found in Homo sapiens (Human).